A 475-amino-acid chain; its full sequence is UDP-N-acetylmuramoylalanine--D-glutamate ligase (475 aa).

Residue 130 to 136 (GTNGKTT) coordinates ATP.

This sequence belongs to the MurCDEF family.

The protein resides in the cytoplasm. The enzyme catalyses UDP-N-acetyl-alpha-D-muramoyl-L-alanine + D-glutamate + ATP = UDP-N-acetyl-alpha-D-muramoyl-L-alanyl-D-glutamate + ADP + phosphate + H(+). It participates in cell wall biogenesis; peptidoglycan biosynthesis. Functionally, cell wall formation. Catalyzes the addition of glutamate to the nucleotide precursor UDP-N-acetylmuramoyl-L-alanine (UMA). The protein is UDP-N-acetylmuramoylalanine--D-glutamate ligase of Corynebacterium efficiens (strain DSM 44549 / YS-314 / AJ 12310 / JCM 11189 / NBRC 100395).